We begin with the raw amino-acid sequence, 264 residues long: Na(+)-translocating NADH-quinone reductase subunit E (264 aa).

A run of 6 helical transmembrane segments spans residues 11 to 31, 50 to 70, 90 to 110, 123 to 143, 149 to 169, and 189 to 209; these read VFGI…NFLG, MSVA…HTFI, FLEL…LELL, GIFL…LFGI, FIPM…AIVL, and MGIS…LTGI.

Belongs to the NqrDE/RnfAE family. Composed of six subunits; NqrA, NqrB, NqrC, NqrD, NqrE and NqrF.

The protein localises to the cell inner membrane. The catalysed reaction is a ubiquinone + n Na(+)(in) + NADH + H(+) = a ubiquinol + n Na(+)(out) + NAD(+). In terms of biological role, NQR complex catalyzes the reduction of ubiquinone-1 to ubiquinol by two successive reactions, coupled with the transport of Na(+) ions from the cytoplasm to the periplasm. NqrA to NqrE are probably involved in the second step, the conversion of ubisemiquinone to ubiquinol. This Chlamydia caviae (strain ATCC VR-813 / DSM 19441 / 03DC25 / GPIC) (Chlamydophila caviae) protein is Na(+)-translocating NADH-quinone reductase subunit E.